The chain runs to 181 residues: Biofilm-surface layer protein A (181 aa).

A signal peptide spans 1 to 28 (MKRKLLSSLAISALSLGLLVSAPTASFA).

The protein belongs to the BslA/BslB family. Forms polymers.

The protein localises to the secreted. It localises to the cell wall. In terms of biological role, involved in biofilm formation. Self-polymerizes and forms a layer on the surface of biofilms that confers hydrophobicity to the biofilm. The layer is stable and capable of resistance to high mechanical force compression. Required for complex colony architecture. May function synergistically with exopolysaccharides and TasA amyloid fibers to facilitate the assembly of the biofilm matrix. The protein is Biofilm-surface layer protein A of Bacillus subtilis (strain 168).